We begin with the raw amino-acid sequence, 106 residues long: MLYAIIEADGKQMWIEPGKYYDVNYIPGEPGDYIQFNKVLVLRQENDIYVGKPCIQSIIIKAKILKHLKSKKITVFKIKPKKNSRKKQGHRQKLTRLLIEEFYNQI.

This sequence belongs to the bacterial ribosomal protein bL21 family. As to quaternary structure, part of the 50S ribosomal subunit.

The protein resides in the plastid. It is found in the chloroplast. Its function is as follows. This protein binds to 23S rRNA. This Gracilaria tenuistipitata var. liui (Red alga) protein is Large ribosomal subunit protein bL21c.